Reading from the N-terminus, the 153-residue chain is MVLPGHVAAQNRRARHEYFIVSEVEAGIMLVGTEVKSLRVGKGNINEAFAGPMQGELFLFNAYIPEYQSKMPFPHETRRPRKLLLHKREMAKLMSAITKDGMTLVPLDIHFGQRGIAKIQLGLAKGKKLHDKREAIKERDWNRDKARLMRDKG.

It belongs to the SmpB family.

The protein localises to the cytoplasm. Required for rescue of stalled ribosomes mediated by trans-translation. Binds to transfer-messenger RNA (tmRNA), required for stable association of tmRNA with ribosomes. tmRNA and SmpB together mimic tRNA shape, replacing the anticodon stem-loop with SmpB. tmRNA is encoded by the ssrA gene; the 2 termini fold to resemble tRNA(Ala) and it encodes a 'tag peptide', a short internal open reading frame. During trans-translation Ala-aminoacylated tmRNA acts like a tRNA, entering the A-site of stalled ribosomes, displacing the stalled mRNA. The ribosome then switches to translate the ORF on the tmRNA; the nascent peptide is terminated with the 'tag peptide' encoded by the tmRNA and targeted for degradation. The ribosome is freed to recommence translation, which seems to be the essential function of trans-translation. In Paramagnetospirillum magneticum (strain ATCC 700264 / AMB-1) (Magnetospirillum magneticum), this protein is SsrA-binding protein.